Consider the following 362-residue polypeptide: Aminomethyltransferase (362 aa).

It belongs to the GcvT family. As to quaternary structure, the glycine cleavage system is composed of four proteins: P, T, L and H.

It catalyses the reaction N(6)-[(R)-S(8)-aminomethyldihydrolipoyl]-L-lysyl-[protein] + (6S)-5,6,7,8-tetrahydrofolate = N(6)-[(R)-dihydrolipoyl]-L-lysyl-[protein] + (6R)-5,10-methylene-5,6,7,8-tetrahydrofolate + NH4(+). In terms of biological role, the glycine cleavage system catalyzes the degradation of glycine. The protein is Aminomethyltransferase of Pseudothermotoga lettingae (strain ATCC BAA-301 / DSM 14385 / NBRC 107922 / TMO) (Thermotoga lettingae).